Consider the following 495-residue polypeptide: Protein SLENDER RICE1-LIKE 1 (495 aa).

The GRAS domain occupies 77 to 449 (EEEEVAGIRL…RPLFSASAWE (373 aa)). The segment at 84-140 (IRLVHLLMSCAGAIEAGDHALASAQLADSHAALAAVSAASGIGRVAVHFTTALSRRL) is leucine repeat I (LRI). The VHIID stretch occupies residues 158-223 (YHHFYEACPY…GGPPFLRITG (66 aa)). Residues 189–193 (VHVID) carry the VHIID motif. Residues 237–269 (DVGLRLADLARSVRVRFSFRGVAANSLDEVRPW) are leucine repeat II (LRII). A PFYRE region spans residues 279–371 (VAFNSVLQLH…EAYLQREICD (93 aa)). The LXXLL motif motif lies at 287-291 (LHRLL). Positions 374–449 (CGEGAARRER…RPLFSASAWE (76 aa)) are SAW. Residues 451–495 (AGDGGGDNNNNSNSNVSGSSGSDSNNSGSSNGKSSGARDGSSVCL) are disordered. Over residues 458–485 (NNNNSNSNVSGSSGSDSNNSGSSNGKSS) the composition is skewed to low complexity.

It belongs to the GRAS family. As to expression, expressed in elongating internodes and flowers. Expressed in floral meristem, stamen primordia and tapetum in developing anthers. Expressed at low levels in roots, shoot apices and rachis.

The protein localises to the nucleus. In terms of biological role, probable transcriptional regulator that acts as a repressor of the gibberellin (GA) signaling pathway. Its repressive activity is weaker than that of SLR1. Its overexpression prevents the GA signaling pathway and induces a dwarf phenotype. The protein is Protein SLENDER RICE1-LIKE 1 of Oryza sativa subsp. japonica (Rice).